Here is a 182-residue protein sequence, read N- to C-terminus: Ribosome-recycling factor (182 aa).

This sequence belongs to the RRF family.

It is found in the cytoplasm. Responsible for the release of ribosomes from messenger RNA at the termination of protein biosynthesis. May increase the efficiency of translation by recycling ribosomes from one round of translation to another. This is Ribosome-recycling factor from Prochlorococcus marinus (strain SARG / CCMP1375 / SS120).